Here is a 412-residue protein sequence, read N- to C-terminus: MMMMSLNSKQAFSMPHAGSLHVEPKYSALHSASPGSSAPAAPSASSPSSSSNAGSGGGGGGGGGGGGGGRSSSSSSSGSGGGGGGGSEAMRRACLPTPPSNIFGGLDESLLARAEALAAVDIVSQSKSHHHHPPHHSPFKPDATYHTMNTIPCTSAASSSSVPISHPSALAGTHHHHHHHHHHHHQPHQALEGELLEHLSPGLALGAMAGPDGTVVSTPAHAPHMATMNPMHQAALSMAHAHGLPSHMGCMSDVDADPRDLEAFAERFKQRRIKLGVTQADVGSALANLKIPGVGSLSQSTICRFESLTLSHNNMIALKPILQAWLEEAEKSHREKLTKPELFNGAEKKRKRTSIAAPEKRSLEAYFAIQPRPSSEKIAAIAEKLDLKKNVVRVWFCNQRQKQKRMKYSAGI.

Residues 29–96 are disordered; that stretch reads LHSASPGSSA…SEAMRRACLP (68 aa). Low complexity predominate over residues 31–53; it reads SASPGSSAPAAPSASSPSSSSNA. Gly residues-rich tracts occupy residues 54 to 70 and 78 to 87; these read GSGG…GGGR and GSGGGGGGGS. Residues 94 to 240 are required for transcriptional activation; it reads CLPTPPSNIF…MHQAALSMAH (147 aa). Residues 113–122 carry the POU-IV box motif; the sequence is RAEALAAVDI. Positions 123–191 are disordered; sequence VSQSKSHHHH…HHHHQPHQAL (69 aa). Basic residues predominate over residues 127–138; that stretch reads KSHHHHPPHHSP. Low complexity predominate over residues 152–169; that stretch reads PCTSAASSSSVPISHPSA. A compositionally biased stretch (basic residues) spans 173–187; the sequence is THHHHHHHHHHHHQP. A Nuclear speckle targeting signal motif is present at residues 174–188; the sequence is HHHHHHHHHHHHQPH. Residues 241–412 are required for DNA-binding and transcriptional repression; the sequence is AHGLPSHMGC…QKRMKYSAGI (172 aa). In terms of domain architecture, POU-specific spans 253 to 330; that stretch reads DVDADPRDLE…ILQAWLEEAE (78 aa). The homeobox DNA-binding region spans 348–407; that stretch reads KKRKRTSIAAPEKRSLEAYFAIQPRPSSEKIAAIAEKLDLKKNVVRVWFCNQRQKQKRMK.

The protein belongs to the POU transcription factor family. Class-4 subfamily. As to quaternary structure, interacts with POU4F1; this interaction inhibits both POU4F1 DNA-binding and transcriptional activities. Interacts (C-terminus) with ESR1 (via DNA-binding domain); this interaction increases the estrogen receptor ESR1 transcriptional activity in a DNA- and ligand 17-beta-estradiol-independent manner. Interacts (via C-terminus) with TP53 (via N-terminus). Interacts with DLX1 (via homeobox DNA-binding domain); this interaction suppresses DLX1-mediated transcriptional activity in postnatal retina enhancing retinal ganglion cell (RGC) differentiation. Interacts with DLX2 (via homeobox DNA-binding domain); this interaction enhances RGC differentiation. Interacts (via C-terminus) with ISL1 (via C-terminus). Interacts with ISL2. Interacts with LHX2. Expressed in the heart, brain and spinal cord. Expressed in cardiomyocytes (at protein level). Expressed in brain and spinal cord. Expressed in dorsal root ganglion (RGD) neurons.

Its subcellular location is the nucleus. It localises to the nucleus speckle. The protein localises to the cytoplasm. In terms of biological role, tissue-specific DNA-binding transcription factor involved in the development and differentiation of target cells. Functions either as activator or repressor modulating the rate of target gene transcription through RNA polymerase II enzyme in a promoter-dependent manner. Binds to the consensus octamer motif 5'-AT[A/T]A[T/A]T[A/T]A-3' of promoter of target genes. Plays a fundamental role in the gene regulatory network essential for retinal ganglion cell (RGC) differentiation. Binds to an octamer site to form a ternary complex with ISL1; cooperates positively with ISL1 and ISL2 to potentiate transcriptional activation of RGC target genes being involved in RGC fate commitment in the developing retina and RGC axon formation and pathfinding. Inhibits DLX1 and DLX2 transcriptional activities preventing DLX1- and DLX2-mediated ability to promote amacrine cell fate specification. In cooperation with TP53 potentiates transcriptional activation of BAX promoter activity increasing neuronal cell apoptosis. Negatively regulates BAX promoter activity in the absence of TP53. Acts as a transcriptional coactivator via its interaction with the transcription factor ESR1 by enhancing its effect on estrogen response element (ERE)-containing promoter. Antagonizes the transcriptional stimulatory activity of POU4F1 by preventing its binding to an octamer motif. Involved in TNFSF11-mediated terminal osteoclast differentiation. This Rattus norvegicus (Rat) protein is POU domain, class 4, transcription factor 2.